The following is a 329-amino-acid chain: Biotin--protein ligase 2 (329 aa).

Positions 67-251 (ISTHRFGRFL…KFENFFDLFM (185 aa)) constitute a BPL/LPL catalytic domain. Biotin-binding positions include 84–85 (ST), Gln107, 111–113 (RGR), and Lys182.

Belongs to the biotin--protein ligase family. As to expression, highly expressed in seeds. Expressed in roots, leaves, stems, flowers and siliques.

Its subcellular location is the cytoplasm. Seems to have no or limited implication in biotin-dependent carboxylase biotinylation in planta. The polypeptide is Biotin--protein ligase 2 (HCS2) (Arabidopsis thaliana (Mouse-ear cress)).